A 686-amino-acid polypeptide reads, in one-letter code: L-type lectin-domain containing receptor kinase VII.1 (686 aa).

The N-terminal stretch at 1 to 20 is a signal peptide; that stretch reads MKALLFLLTLFLILPNPISA. The interval 21-256 is legume-lectin like; the sequence is IDFIFNGFND…SHKILAWSFS (236 aa). The Extracellular segment spans residues 21–286; that stretch reads IDFIFNGFND…PKDSIVKAKW (266 aa). N-linked (GlcNAc...) asparagine glycosylation is found at asparagine 29, asparagine 34, asparagine 52, asparagine 64, asparagine 111, asparagine 123, asparagine 168, asparagine 203, asparagine 224, and asparagine 259. A helical transmembrane segment spans residues 287–307; the sequence is FVFVLVLICFLVVALVGLVLF. The Cytoplasmic portion of the chain corresponds to 308–686; that stretch reads AVVRKRLERA…SWNSSILEGR (379 aa). Positions 347 to 628 constitute a Protein kinase domain; that stretch reads FDEKNVIGIG…VFEGDKAEIF (282 aa). ATP is bound by residues 353-361 and lysine 376; that span reads IGIGGNGKV. The Proton acceptor role is filled by aspartate 475.

The protein in the C-terminal section; belongs to the protein kinase superfamily. Ser/Thr protein kinase family. This sequence in the N-terminal section; belongs to the leguminous lectin family.

It is found in the cell membrane. The enzyme catalyses L-seryl-[protein] + ATP = O-phospho-L-seryl-[protein] + ADP + H(+). It catalyses the reaction L-threonyl-[protein] + ATP = O-phospho-L-threonyl-[protein] + ADP + H(+). This is L-type lectin-domain containing receptor kinase VII.1 (LECRK71) from Arabidopsis thaliana (Mouse-ear cress).